The sequence spans 167 residues: Protein-export protein SecB (167 aa).

The protein belongs to the SecB family. Homotetramer, a dimer of dimers. One homotetramer interacts with 1 SecA dimer.

The protein resides in the cytoplasm. Its function is as follows. One of the proteins required for the normal export of preproteins out of the cell cytoplasm. It is a molecular chaperone that binds to a subset of precursor proteins, maintaining them in a translocation-competent state. It also specifically binds to its receptor SecA. This Cellvibrio japonicus (strain Ueda107) (Pseudomonas fluorescens subsp. cellulosa) protein is Protein-export protein SecB.